Here is a 301-residue protein sequence, read N- to C-terminus: Transcriptional activator FeaR (301 aa).

The region spanning 199-299 is the HTH araC/xylS-type domain; it reads QKVVTLIDDN…GMTPGEYRRK (101 aa). 2 DNA-binding regions (H-T-H motif) span residues 217–238 and 266–289; these read EWIA…ADKG and LAGI…KQRF.

In terms of biological role, positive regulator of tynA/maoA and feaB/padA, the genes for 2-phenylethylamine catabolism. The sequence is that of Transcriptional activator FeaR (feaR) from Escherichia coli (strain K12).